The sequence spans 293 residues: Urease accessory protein UreD (293 aa).

It belongs to the UreD family. As to quaternary structure, ureD, UreF and UreG form a complex that acts as a GTP-hydrolysis-dependent molecular chaperone, activating the urease apoprotein by helping to assemble the nickel containing metallocenter of UreC. The UreE protein probably delivers the nickel.

It localises to the cytoplasm. Functionally, required for maturation of urease via the functional incorporation of the urease nickel metallocenter. The chain is Urease accessory protein UreD from Arthrobacter sp. (strain FB24).